Consider the following 764-residue polypeptide: Serine/threonine-protein kinase MPS1 (764 aa).

Disordered stretches follow at residues 66 to 95, 197 to 216, and 258 to 316; these read EEMD…SSHS, ELPL…RNTD, and QAAL…KSSI. The segment covering 85 to 95 has biased composition (low complexity); sequence TSGHTSTSSHS. Basic and acidic residues predominate over residues 201 to 216; that stretch reads EDSHQTNFKETKRNTD. 2 stretches are compositionally biased toward low complexity: residues 272–292 and 306–315; these read KSRS…KDNS and STGSSSSKSS. Residues 440-720 enclose the Protein kinase domain; that stretch reads YEKIELLGRG…LSSTFLQPFM (281 aa). Residues 446-454 and lysine 468 contribute to the ATP site; that span reads LGRGGSSRV. Residue aspartate 563 is the Proton acceptor of the active site.

The protein belongs to the protein kinase superfamily. Ser/Thr protein kinase family. In terms of processing, autophosphorylated.

The catalysed reaction is L-seryl-[protein] + ATP = O-phospho-L-seryl-[protein] + ADP + H(+). The enzyme catalyses L-threonyl-[protein] + ATP = O-phospho-L-threonyl-[protein] + ADP + H(+). It catalyses the reaction L-tyrosyl-[protein] + ATP = O-phospho-L-tyrosyl-[protein] + ADP + H(+). Involved in mitotic spindle assembly checkpoint signaling, a process that delays anaphase until chromosomes are bioriented on the spindle, and in the repair of incorrect mitotic kinetochore-spindle microtubule attachments. Phosphorylates SPC105 on MELT motifs; phosphorylation is required for recruitment of the BUB1-BUB3 complex to kinetochores. Phosphorylates CNN1, which contributes to the enrichment of CNN1 on anaphase kinetochores. Implicated in spindle pole body (SPD) duplication. Phosphorylates the SPC29 and SPC110 spindle pole body components. This is Serine/threonine-protein kinase MPS1 (MPS1) from Saccharomyces cerevisiae (strain ATCC 204508 / S288c) (Baker's yeast).